The primary structure comprises 329 residues: Protein-arginine N-acetylglucosaminyltransferase NleB (329 aa).

R13 carries an N-beta-linked (GlcNAc) arginine; by autocatalysis glycan. 48–50 contributes to the UDP-N-acetyl-alpha-D-glucosamine binding site; the sequence is QWF. R53 carries N-beta-linked (GlcNAc) arginine; by autocatalysis glycosylation. UDP-N-acetyl-alpha-D-glucosamine is bound at residue Y72. An N-beta-linked (GlcNAc) arginine; by autocatalysis glycan is attached at R159. 219-222 contributes to the UDP-N-acetyl-alpha-D-glucosamine binding site; the sequence is YLDA. A DXD motif motif is present at residues 221–223; the sequence is DAD. Residue D223 coordinates Mn(2+). E253 acts as the Proton acceptor in catalysis. An N-beta-linked (GlcNAc) arginine; by autocatalysis glycan is attached at R293. Mn(2+) is bound by residues N320 and S322. UDP-N-acetyl-alpha-D-glucosamine is bound by residues S322 and 327–329; that span reads SSW.

It belongs to the glycosyltransferase NleB family. Requires Mn(2+) as cofactor. Post-translationally, auto-glycosylated: arginine GlcNAcylation is required for activity toward death domain-containing host target proteins.

Its subcellular location is the secreted. The protein resides in the host cell. The catalysed reaction is L-arginyl-[protein] + UDP-N-acetyl-alpha-D-glucosamine = N(omega)-(N-acetyl-beta-D-glucosaminyl)-L-arginyl-[protein] + UDP + H(+). In terms of biological role, protein-arginine N-acetylglucosaminyltransferase effector that disrupts TNF signaling in infected cells, including NF-kappa-B signaling, apoptosis and necroptosis. Acts by catalyzing the transfer of a single N-acetylglucosamine (GlcNAc) to a conserved arginine residue in the death domain of host proteins FADD, TNFRSF1A and RIPK1: arginine GlcNAcylation prevents homotypic/heterotypic death domain interactions and assembly of the oligomeric TNF-alpha receptor complex, thereby disrupting TNF signaling. Has preference for host FADD as substrate compared to TNFRSF1A and RIPK1. Also acts on host proteins without a death domain: catalyzes GlcNAcylation of host GAPDH protein, thereby preventing GAPDH interaction with TRAF2 and TRAF3, leading to inhibit NF-kappa-B signaling and type I interferon production, respectively. Also displays intra-bacterial activity by mediating GlcNAcylation of glutathione synthetase GshB. Catalyzes auto-GlcNAcylation, which is required for activity toward death domain-containing host target proteins. This is Protein-arginine N-acetylglucosaminyltransferase NleB from Citrobacter rodentium.